The sequence spans 123 residues: Holo-[acyl-carrier-protein] synthase (123 aa).

The Mg(2+) site is built by Asp-8 and Glu-56.

Belongs to the P-Pant transferase superfamily. AcpS family. The cofactor is Mg(2+).

The protein localises to the cytoplasm. The enzyme catalyses apo-[ACP] + CoA = holo-[ACP] + adenosine 3',5'-bisphosphate + H(+). Its function is as follows. Transfers the 4'-phosphopantetheine moiety from coenzyme A to a Ser of acyl-carrier-protein. The protein is Holo-[acyl-carrier-protein] synthase of Clostridium beijerinckii (strain ATCC 51743 / NCIMB 8052) (Clostridium acetobutylicum).